A 351-amino-acid polypeptide reads, in one-letter code: ATP-dependent protease ATP-binding subunit-like protein (351 aa).

Positions 1 to 26 are disordered; it reads MPYITDMLRDRNSAATPPAEERSEPV. 79-86 provides a ligand contact to ATP; sequence GPTGVGKT.

It belongs to the ClpA/ClpB family.

The sequence is that of ATP-dependent protease ATP-binding subunit-like protein from Rhodococcus erythropolis (Arthrobacter picolinophilus).